The sequence spans 274 residues: Ribonucleoside-diphosphate reductase small chain (274 aa).

Positions 70, 101, and 104 each coordinate Fe cation. The active site involves Tyr108. Residues Glu163, Glu197, and His200 each contribute to the Fe cation site.

Belongs to the ribonucleoside diphosphate reductase small chain family. As to quaternary structure, heterodimer of a large and a small chain. Fe cation is required as a cofactor.

It catalyses the reaction a 2'-deoxyribonucleoside 5'-diphosphate + [thioredoxin]-disulfide + H2O = a ribonucleoside 5'-diphosphate + [thioredoxin]-dithiol. Functionally, ribonucleoside-diphosphate reductase holoenzyme provides the precursors necessary for viral DNA synthesis. Allows virus growth in non-dividing cells. Catalyzes the biosynthesis of deoxyribonucleotides from the corresponding ribonucleotides. The chain is Ribonucleoside-diphosphate reductase small chain from Sus scrofa (Pig).